We begin with the raw amino-acid sequence, 257 residues long: 1-(5-phosphoribosyl)-5-[(5-phosphoribosylamino)methylideneamino] imidazole-4-carboxamide isomerase (257 aa).

Asp8 serves as the catalytic Proton acceptor. Catalysis depends on Asp131, which acts as the Proton donor.

It belongs to the HisA/HisF family.

It localises to the cytoplasm. It carries out the reaction 1-(5-phospho-beta-D-ribosyl)-5-[(5-phospho-beta-D-ribosylamino)methylideneamino]imidazole-4-carboxamide = 5-[(5-phospho-1-deoxy-D-ribulos-1-ylimino)methylamino]-1-(5-phospho-beta-D-ribosyl)imidazole-4-carboxamide. Its pathway is amino-acid biosynthesis; L-histidine biosynthesis; L-histidine from 5-phospho-alpha-D-ribose 1-diphosphate: step 4/9. This is 1-(5-phosphoribosyl)-5-[(5-phosphoribosylamino)methylideneamino] imidazole-4-carboxamide isomerase from Nitrosospira multiformis (strain ATCC 25196 / NCIMB 11849 / C 71).